The sequence spans 512 residues: Altronate oxidoreductase (512 aa).

An NAD(+)-binding site is contributed by 26–37 (VLQFGEGNFLRG).

It belongs to the mannitol dehydrogenase family. UxaB subfamily.

The enzyme catalyses D-altronate + NAD(+) = keto-D-tagaturonate + NADH + H(+). The protein operates within carbohydrate metabolism; pentose and glucuronate interconversion. In Halalkalibacterium halodurans (strain ATCC BAA-125 / DSM 18197 / FERM 7344 / JCM 9153 / C-125) (Bacillus halodurans), this protein is Altronate oxidoreductase.